The sequence spans 214 residues: Chalcone isomerase-like protein 1 (214 aa).

The protein belongs to the chalcone isomerase family. In terms of tissue distribution, mostly expressed in glandular trichomes (lupulin glands), and, to a lower extent, in cones, cones bracts, leaves, stems and roots.

It localises to the cytoplasm. The catalysed reaction is a chalcone = a flavanone.. Its pathway is secondary metabolite biosynthesis; flavonoid biosynthesis. Involved in the biosynthesis of prenylated phenolics natural products which contribute to the bitter taste of beer and display broad biological activities. Involved in anthocyanin biosynthesis. Polyketide binding proteins (PBP) which reduces the catalytic activities of CHS_H1 and PT1L and prevents demethylxanthohumol (DMX) production, by binding to DMX and naringenin chalcone (NC) to stabilize the chalconoids ring-opened structure. In Humulus lupulus (European hop), this protein is Chalcone isomerase-like protein 1.